The sequence spans 91 residues: uncharacterized protein (91 aa).

Residues 7–23 (IALVGVVVVLFGALRYQ) traverse the membrane as a helical segment.

The protein localises to the membrane. This is an uncharacterized protein from Haemophilus influenzae (strain ATCC 51907 / DSM 11121 / KW20 / Rd).